A 117-amino-acid chain; its full sequence is Large ribosomal subunit protein bL20 (117 aa).

The protein belongs to the bacterial ribosomal protein bL20 family.

Functionally, binds directly to 23S ribosomal RNA and is necessary for the in vitro assembly process of the 50S ribosomal subunit. It is not involved in the protein synthesizing functions of that subunit. This is Large ribosomal subunit protein bL20 from Rickettsia peacockii (strain Rustic).